A 373-amino-acid chain; its full sequence is UDP-3-O-acylglucosamine N-acyltransferase 2 (373 aa).

Residue His257 is the Proton acceptor of the active site. The tract at residues 346 to 373 (DGRTAASAEAAAPSSDATGVDQPDQAAS) is disordered. Positions 350–362 (AASAEAAAPSSDA) are enriched in low complexity.

The protein belongs to the transferase hexapeptide repeat family. LpxD subfamily. Homotrimer.

The enzyme catalyses a UDP-3-O-[(3R)-3-hydroxyacyl]-alpha-D-glucosamine + a (3R)-hydroxyacyl-[ACP] = a UDP-2-N,3-O-bis[(3R)-3-hydroxyacyl]-alpha-D-glucosamine + holo-[ACP] + H(+). The protein operates within bacterial outer membrane biogenesis; LPS lipid A biosynthesis. Catalyzes the N-acylation of UDP-3-O-acylglucosamine using 3-hydroxyacyl-ACP as the acyl donor. Is involved in the biosynthesis of lipid A, a phosphorylated glycolipid that anchors the lipopolysaccharide to the outer membrane of the cell. The protein is UDP-3-O-acylglucosamine N-acyltransferase 2 of Rhodopseudomonas palustris (strain BisB18).